Here is a 621-residue protein sequence, read N- to C-terminus: Interferon-induced GTP-binding protein Mx1 (621 aa).

In terms of domain architecture, Dynamin-type G spans Asp-31–Pro-304. The segment at Gly-41–Ser-48 is G1 motif. Gly-41–Ser-48 contacts GTP. A G2 motif region spans residues Val-66–Arg-68. Residues Asp-142 to Gly-145 form a G3 motif region. GTP contacts are provided by residues Asp-142–Ile-146 and Thr-211–Asp-214. The segment at Thr-211–Asp-214 is G4 motif. The tract at residues Lys-243–Gly-246 is G5 motif. The GED domain maps to Leu-535–Phe-621.

It belongs to the TRAFAC class dynamin-like GTPase superfamily. Dynamin/Fzo/YdjA family.

The protein resides in the cytoplasm. In terms of biological role, does not inhibit strain RB-1 of the fish pathogen, infectious hematopoietic necrosis virus (IHNV). The sequence is that of Interferon-induced GTP-binding protein Mx1 (mx1) from Oncorhynchus mykiss (Rainbow trout).